We begin with the raw amino-acid sequence, 339 residues long: Nicotinate-nucleotide--dimethylbenzimidazole phosphoribosyltransferase (339 aa).

E306 acts as the Proton acceptor in catalysis.

It belongs to the CobT family.

It carries out the reaction 5,6-dimethylbenzimidazole + nicotinate beta-D-ribonucleotide = alpha-ribazole 5'-phosphate + nicotinate + H(+). The protein operates within nucleoside biosynthesis; alpha-ribazole biosynthesis; alpha-ribazole from 5,6-dimethylbenzimidazole: step 1/2. Functionally, catalyzes the synthesis of alpha-ribazole-5'-phosphate from nicotinate mononucleotide (NAMN) and 5,6-dimethylbenzimidazole (DMB). The protein is Nicotinate-nucleotide--dimethylbenzimidazole phosphoribosyltransferase of Brucella melitensis biotype 1 (strain ATCC 23456 / CCUG 17765 / NCTC 10094 / 16M).